We begin with the raw amino-acid sequence, 131 residues long: Profilin-5 (131 aa).

A disulfide bridge links Cys13 with Cys115. Positions 81–97 (AVIRGKKGAGGITIKKT) match the Involved in PIP2 interaction motif. Residue Thr111 is modified to Phosphothreonine.

It belongs to the profilin family. Occurs in many kinds of cells as a complex with monomeric actin in a 1:1 ratio. Phosphorylated by MAP kinases.

It localises to the cytoplasm. The protein resides in the cytoskeleton. Its function is as follows. Binds to actin and affects the structure of the cytoskeleton. At high concentrations, profilin prevents the polymerization of actin, whereas it enhances it at low concentrations. The chain is Profilin-5 from Phleum pratense (Common timothy).